The primary structure comprises 328 residues: Purple acid phosphatase 7 (328 aa).

A signal peptide spans 1-24 (MKMHVCFSVILMFLSIFFINGALS). Fe cation is bound at residue Asp-48. An N-linked (GlcNAc...) asparagine glycan is attached at Asn-56. Residues Asp-81 and Tyr-84 each coordinate Fe cation. Residue Asp-81 coordinates Zn(2+). The Zn(2+) site is built by Asn-119 and His-213. His-222 (proton donor) is an active-site residue. His-248 serves as a coordination point for Zn(2+). 248–250 (HDH) is a substrate binding site. Residue His-250 coordinates Fe cation.

Belongs to the metallophosphoesterase superfamily. Purple acid phosphatase family. Homodimer. Requires Fe cation as cofactor. Zn(2+) is required as a cofactor. Expressed in roots, stems, leaves, flowers and siliques.

It is found in the secreted. It catalyses the reaction a phosphate monoester + H2O = an alcohol + phosphate. The chain is Purple acid phosphatase 7 (PAP7) from Arabidopsis thaliana (Mouse-ear cress).